A 235-amino-acid chain; its full sequence is 2-C-methyl-D-erythritol 4-phosphate cytidylyltransferase (235 aa).

This sequence belongs to the IspD/TarI cytidylyltransferase family. IspD subfamily. Homodimer.

It carries out the reaction 2-C-methyl-D-erythritol 4-phosphate + CTP + H(+) = 4-CDP-2-C-methyl-D-erythritol + diphosphate. It functions in the pathway isoprenoid biosynthesis; isopentenyl diphosphate biosynthesis via DXP pathway; isopentenyl diphosphate from 1-deoxy-D-xylulose 5-phosphate: step 2/6. Catalyzes the formation of 4-diphosphocytidyl-2-C-methyl-D-erythritol from CTP and 2-C-methyl-D-erythritol 4-phosphate (MEP). The chain is 2-C-methyl-D-erythritol 4-phosphate cytidylyltransferase from Serratia proteamaculans (strain 568).